Consider the following 264-residue polypeptide: Taurine import ATP-binding protein TauB (264 aa).

The region spanning 4-233 is the ABC transporter domain; sequence LQLERISAQY…RYAAGESARA (230 aa). Position 38-45 (38-45) interacts with ATP; sequence GPSGSGKT.

The protein belongs to the ABC transporter superfamily. Taurine importer (TC 3.A.1.17.1) family. In terms of assembly, the complex is composed of two ATP-binding proteins (TauB), two transmembrane proteins (TauC) and a solute-binding protein (TauA).

The protein resides in the cell inner membrane. It catalyses the reaction taurine(out) + ATP + H2O = taurine(in) + ADP + phosphate + H(+). Its function is as follows. Part of the ABC transporter complex TauABC involved in taurine import. Responsible for energy coupling to the transport system. This is Taurine import ATP-binding protein TauB from Pseudomonas fluorescens (strain ATCC BAA-477 / NRRL B-23932 / Pf-5).